A 78-amino-acid chain; its full sequence is MPKRILQGVVVSDKNEKTVVVRVERRFAHPLMQKTVRRSKKYKAHDENNQYKVGDVVSIEECAPISKDKRWTVVAAQA.

Belongs to the universal ribosomal protein uS17 family. In terms of assembly, part of the 30S ribosomal subunit.

In terms of biological role, one of the primary rRNA binding proteins, it binds specifically to the 5'-end of 16S ribosomal RNA. This Agrobacterium fabrum (strain C58 / ATCC 33970) (Agrobacterium tumefaciens (strain C58)) protein is Small ribosomal subunit protein uS17.